A 351-amino-acid polypeptide reads, in one-letter code: Transmembrane protein 255A (351 aa).

A run of 4 helical transmembrane segments spans residues 30 to 50, 57 to 77, 89 to 109, and 226 to 246; these read IYVT…GLAA, VTVG…LGII, LVAS…CAIV, and TILN…LGGF. Residues 302-331 are disordered; that stretch reads FPSSPPSGLSDEQEPQSPSPSPSYMWSSSA.

Belongs to the TMEM255 family.

The protein resides in the membrane. The protein is Transmembrane protein 255A (Tmem255a) of Rattus norvegicus (Rat).